A 173-amino-acid polypeptide reads, in one-letter code: Putative phosphoesterase GK0864 (173 aa).

His34 functions as the Proton donor in the catalytic mechanism. Short sequence motifs (HXTX) lie at residues 34-37 (HITL) and 115-118 (HITI). His115 serves as the catalytic Proton acceptor.

The protein belongs to the 2H phosphoesterase superfamily. YjcG family.

The polypeptide is Putative phosphoesterase GK0864 (Geobacillus kaustophilus (strain HTA426)).